Here is a 568-residue protein sequence, read N- to C-terminus: Urease subunit alpha (568 aa).

Residues 131 to 568 (GGIDTHIHFI…LPMAQRYFLF (438 aa)) form the Urease domain. 3 residues coordinate Ni(2+): H136, H138, and K219. K219 carries the post-translational modification N6-carboxylysine. Residue H221 participates in substrate binding. The Ni(2+) site is built by H248 and H274. Catalysis depends on H322, which acts as the Proton donor. Ni(2+) is bound at residue D362.

The protein belongs to the metallo-dependent hydrolases superfamily. Urease alpha subunit family. In terms of assembly, heterotrimer of UreA (gamma), UreB (beta) and UreC (alpha) subunits. Three heterotrimers associate to form the active enzyme. The cofactor is Ni cation. In terms of processing, carboxylation allows a single lysine to coordinate two nickel ions.

The protein resides in the cytoplasm. The catalysed reaction is urea + 2 H2O + H(+) = hydrogencarbonate + 2 NH4(+). Its pathway is nitrogen metabolism; urea degradation; CO(2) and NH(3) from urea (urease route): step 1/1. This chain is Urease subunit alpha, found in Trichormus variabilis (strain ATCC 29413 / PCC 7937) (Anabaena variabilis).